Here is a 396-residue protein sequence, read N- to C-terminus: Protein Njmu-R1 (396 aa).

The segment at 1 to 78 (MLPSLQESMD…SGDDFSLSLA (78 aa)) is disordered. Residues S8 and S18 each carry the phosphoserine modification. Residues 9–24 (MDGDEKELESSEEGGS) are compositionally biased toward acidic residues. The segment covering 58-67 (GSPSGTNAET) has biased composition (polar residues).

In terms of assembly, component of the complex WDR11 composed of C17orf75, FAM91A1 and WDR11; FAM91A1 and WDR11 are required for proper location of the complex. Interacts with TBC1D23; this interaction may be indirect and recruits TBC1D23 to AP-1-derived vesicles. In terms of tissue distribution, highly expressed in testis and also expressed in fetal testis.

The protein localises to the golgi apparatus. It localises to the trans-Golgi network. It is found in the cytoplasmic vesicle. In terms of biological role, as component of the WDR11 complex acts together with TBC1D23 to facilitate the golgin-mediated capture of vesicles generated using AP-1. May have a role in spermatogenesis. The protein is Protein Njmu-R1 (C17orf75) of Homo sapiens (Human).